The sequence spans 146 residues: Transcriptional regulator MraZ (146 aa).

SpoVT-AbrB domains are found at residues Asn7–Leu54 and Gly83–Ala126.

The protein belongs to the MraZ family. As to quaternary structure, forms oligomers.

It is found in the cytoplasm. The protein localises to the nucleoid. In Rhizobium rhizogenes (strain K84 / ATCC BAA-868) (Agrobacterium radiobacter), this protein is Transcriptional regulator MraZ.